The chain runs to 468 residues: Ribulose bisphosphate carboxylase large chain (468 aa).

The residue at position 5 (K5) is an N6,N6,N6-trimethyllysine. N114 and T164 together coordinate substrate. K166 (proton acceptor) is an active-site residue. Residue K168 participates in substrate binding. K192, D194, and E195 together coordinate Mg(2+). K192 carries the post-translational modification N6-carboxylysine. H285 serves as the catalytic Proton acceptor. The substrate site is built by R286, H318, and S370.

It belongs to the RuBisCO large chain family. Type I subfamily. Heterohexadecamer of 8 large chains and 8 small chains; disulfide-linked. The disulfide link is formed within the large subunit homodimers. Requires Mg(2+) as cofactor. The disulfide bond which can form in the large chain dimeric partners within the hexadecamer appears to be associated with oxidative stress and protein turnover.

It is found in the plastid. Its subcellular location is the chloroplast. The enzyme catalyses 2 (2R)-3-phosphoglycerate + 2 H(+) = D-ribulose 1,5-bisphosphate + CO2 + H2O. It catalyses the reaction D-ribulose 1,5-bisphosphate + O2 = 2-phosphoglycolate + (2R)-3-phosphoglycerate + 2 H(+). Functionally, ruBisCO catalyzes two reactions: the carboxylation of D-ribulose 1,5-bisphosphate, the primary event in carbon dioxide fixation, as well as the oxidative fragmentation of the pentose substrate in the photorespiration process. Both reactions occur simultaneously and in competition at the same active site. In Salvia divinorum (Maria pastora), this protein is Ribulose bisphosphate carboxylase large chain.